Here is a 429-residue protein sequence, read N- to C-terminus: 3-phosphoshikimate 1-carboxyvinyltransferase (429 aa).

The 3-phosphoshikimate site is built by K20, S21, and R25. Position 20 (K20) interacts with phosphoenolpyruvate. G89 and R118 together coordinate phosphoenolpyruvate. Residues S164, S165, Q166, S192, D311, and K338 each coordinate 3-phosphoshikimate. Q166 contributes to the phosphoenolpyruvate binding site. D311 functions as the Proton acceptor in the catalytic mechanism. Phosphoenolpyruvate is bound by residues R342 and R384.

The protein belongs to the EPSP synthase family. As to quaternary structure, monomer.

The protein resides in the cytoplasm. It catalyses the reaction 3-phosphoshikimate + phosphoenolpyruvate = 5-O-(1-carboxyvinyl)-3-phosphoshikimate + phosphate. The protein operates within metabolic intermediate biosynthesis; chorismate biosynthesis. Catalyzes the transfer of the enolpyruvyl moiety of phosphoenolpyruvate (PEP) to the 5-hydroxyl of shikimate-3-phosphate (S3P) to produce enolpyruvyl shikimate-3-phosphate and inorganic phosphate. This Methanococcus maripaludis (strain C5 / ATCC BAA-1333) protein is 3-phosphoshikimate 1-carboxyvinyltransferase.